Here is a 434-residue protein sequence, read N- to C-terminus: Glutamyl-tRNA reductase (434 aa).

Substrate is bound by residues 49-52 (TCNR), Ser109, 114-116 (EPQ), and Gln120. The active-site Nucleophile is the Cys50. Residue 189–194 (GAGEMC) coordinates NADP(+).

It belongs to the glutamyl-tRNA reductase family. Homodimer.

It catalyses the reaction (S)-4-amino-5-oxopentanoate + tRNA(Glu) + NADP(+) = L-glutamyl-tRNA(Glu) + NADPH + H(+). It participates in porphyrin-containing compound metabolism; protoporphyrin-IX biosynthesis; 5-aminolevulinate from L-glutamyl-tRNA(Glu): step 1/2. In terms of biological role, catalyzes the NADPH-dependent reduction of glutamyl-tRNA(Glu) to glutamate 1-semialdehyde (GSA). The sequence is that of Glutamyl-tRNA reductase from Geobacter metallireducens (strain ATCC 53774 / DSM 7210 / GS-15).